Consider the following 380-residue polypeptide: DNA replication and repair protein RecF (380 aa).

An ATP-binding site is contributed by 30 to 37; it reads GQNGQGKT.

Belongs to the RecF family.

Its subcellular location is the cytoplasm. The RecF protein is involved in DNA metabolism; it is required for DNA replication and normal SOS inducibility. RecF binds preferentially to single-stranded, linear DNA. It also seems to bind ATP. The protein is DNA replication and repair protein RecF of Myxococcus xanthus (strain DK1622).